The following is a 290-amino-acid chain: MNLEEYFARTGYKGSLENQDLETLTDIFQHHIRAVPFENLSIHCGEKITLELEHVYNKIVHKKRGGWCMENNQLLGWVLKCLGYDTSFLGAYVFNPHENAYATIMTHLLVKVVIEGKAYIVDAGFGVSYQMWQPMELVSGKDQPQAPGIFRFTEKNAIWYLEKMRRKQYIPNQNFSNSDLLEKKDCRKVYMFSLEPRTVEDFCFQCTYLQTSPDSLFTKKSICTLQTTDGFRALIGWTLTETKYNYKENMDLVEFITLKDEEVEKTLKDKFNITLERKLVPINVKGFYTI.

The Acyl-thioester intermediate role is filled by cysteine 68. Catalysis depends on residues histidine 107 and aspartate 122.

Belongs to the arylamine N-acetyltransferase family.

The enzyme catalyses an arylamine + acetyl-CoA = an N-acetylarylamine + CoA. The polypeptide is Arylamine N-acetyltransferase, pineal gland isozyme NAT-10 (Gallus gallus (Chicken)).